The sequence spans 90 residues: Small ribosomal subunit protein bS6 (90 aa).

Lys-33 participates in a covalent cross-link: Isoglutamyl lysine isopeptide (Lys-Gln) (interchain with Q-Cter in protein Pup).

This sequence belongs to the bacterial ribosomal protein bS6 family.

Its function is as follows. Binds together with bS18 to 16S ribosomal RNA. The polypeptide is Small ribosomal subunit protein bS6 (rpsF) (Mycolicibacterium smegmatis (strain ATCC 700084 / mc(2)155) (Mycobacterium smegmatis)).